The chain runs to 427 residues: MSYSRSHQFFERARKVIPGGVNSPVRAFKAVGRQPLFIERAEGCTLVDADGNRYIDYVGSWGPMIVGHSHPKVVEAICDAAARGTSFGAPTALEIELAEQVCAAFPNMESVRMVSSGTEATMSAIRLARGVTGRDKILKFEGCYHGHADSLLVDAGSGVATFGIPASPGVPADFARHTLTAPYNDLGRVRALVEEHKADLAAIILEPIAGNMGCVPPQPGFLEGLRALCDQHEILLIIDEVMTGFRVSYGGAQQLYGVRGDLVCLGKVIGGGLPVGAFGGRQDIMRHLAPDGGVYQAGTLSGNPLAMSAGIATLKLIREEGVYEQLEQRSAYLAEGLRQAAAAAGVPACLQRVGSMFCNYFQTGPVTSFADAKASDTEAFARYFGQMLDNGVHLAPSQFEAGFVSLAHTVEDIDRTVEAAHRSLKAI.

Residue Lys-267 is modified to N6-(pyridoxal phosphate)lysine.

Belongs to the class-III pyridoxal-phosphate-dependent aminotransferase family. HemL subfamily. In terms of assembly, homodimer. The cofactor is pyridoxal 5'-phosphate.

Its subcellular location is the cytoplasm. It catalyses the reaction (S)-4-amino-5-oxopentanoate = 5-aminolevulinate. The protein operates within porphyrin-containing compound metabolism; protoporphyrin-IX biosynthesis; 5-aminolevulinate from L-glutamyl-tRNA(Glu): step 2/2. The chain is Glutamate-1-semialdehyde 2,1-aminomutase from Syntrophotalea carbinolica (strain DSM 2380 / NBRC 103641 / GraBd1) (Pelobacter carbinolicus).